A 291-amino-acid chain; its full sequence is 4-diphosphocytidyl-2-C-methyl-D-erythritol kinase (291 aa).

Residue K10 is part of the active site. Residue 94 to 104 (PVSAGLAGGSS) participates in ATP binding. The active site involves D136.

Belongs to the GHMP kinase family. IspE subfamily.

The enzyme catalyses 4-CDP-2-C-methyl-D-erythritol + ATP = 4-CDP-2-C-methyl-D-erythritol 2-phosphate + ADP + H(+). The protein operates within isoprenoid biosynthesis; isopentenyl diphosphate biosynthesis via DXP pathway; isopentenyl diphosphate from 1-deoxy-D-xylulose 5-phosphate: step 3/6. In terms of biological role, catalyzes the phosphorylation of the position 2 hydroxy group of 4-diphosphocytidyl-2C-methyl-D-erythritol. The polypeptide is 4-diphosphocytidyl-2-C-methyl-D-erythritol kinase (Listeria monocytogenes serotype 4a (strain HCC23)).